The primary structure comprises 1086 residues: Formin-like protein 2 (1086 aa).

Residue glycine 2 is the site of N-myristoyl glycine attachment. The GBD/FH3 domain occupies 23–469 (LPMPEPGELE…EAIQRQSTLE (447 aa)). Serine 188 carries the post-translational modification Phosphoserine. Residues 513–597 (SVGPTMGAAS…APPLPSAPPL (85 aa)) form a disordered region. Residues 525–537 (PLPPPPPPLPPSS) are compositionally biased toward pro residues. The span at 538 to 547 (DTPETVQNGP) shows a compositional bias: polar residues. Composition is skewed to pro residues over residues 548–576 (VTPP…PLPG) and 583–597 (PAPP…APPL). The FH2 domain maps to 616–1007 (IKKPIKTKFR…LMEKLLEQEA (392 aa)). Positions 1040–1079 (NRHVYEGKDGAIEDIITVLKTVPFTARTAKRGSRFFCEPV) constitute a DAD domain.

It belongs to the formin homology family.

Its subcellular location is the cytoplasm. In terms of biological role, plays a role in the regulation of cell morphology and cytoskeletal organization. Required in the cortical actin filament dynamics. In Homo sapiens (Human), this protein is Formin-like protein 2.